We begin with the raw amino-acid sequence, 323 residues long: Methionyl-tRNA formyltransferase (323 aa).

117-120 (SLLP) provides a ligand contact to (6S)-5,6,7,8-tetrahydrofolate.

Belongs to the Fmt family.

It catalyses the reaction L-methionyl-tRNA(fMet) + (6R)-10-formyltetrahydrofolate = N-formyl-L-methionyl-tRNA(fMet) + (6S)-5,6,7,8-tetrahydrofolate + H(+). In terms of biological role, attaches a formyl group to the free amino group of methionyl-tRNA(fMet). The formyl group appears to play a dual role in the initiator identity of N-formylmethionyl-tRNA by promoting its recognition by IF2 and preventing the misappropriation of this tRNA by the elongation apparatus. This chain is Methionyl-tRNA formyltransferase, found in Albidiferax ferrireducens (strain ATCC BAA-621 / DSM 15236 / T118) (Rhodoferax ferrireducens).